The following is a 411-amino-acid chain: MITHFRQAIEETLPWLSSFGADPAGGMTRLLYSPEWLETQQQFKKRMAASGLETRFDEVGNLYGRLNGTEYPQEVVLSGSHIDTVVNGGNLDGQFGALAAWLAIDWLKTQYGAPLRTVEVVAMAEEEGSRFPYVFWGSKNIFGLANPDDVRNICDAKGNSFVDAMKACGFTLPNAPLTPRQDIKAFVELHIEQGCVLESNGQSIGVVNAIVGQRRYTVTLNGESNHAGTTPMGYRRDTVYAFSRICHQSVEKAKRMGDPLVLTFGKVEPRPNTVNVVPGKTTFTIDCRHTDAAVLRDFTQQLENDMRAICDEMDIGIDIDLWMDEEPVPMNKELVATLTELCEREKLNYRVMHSGAGHDAQIFAPRVPTCMIFIPSINGISHNPAERTNITDLAEGVKTLALMLYQLAWQK.

4 residues coordinate Zn(2+): histidine 81, aspartate 92, glutamate 127, and histidine 190. Allantoate-binding residues include arginine 215, asparagine 275, and arginine 288. Histidine 382 provides a ligand contact to Zn(2+).

The protein belongs to the peptidase M20 family. As to quaternary structure, homodimer. Zn(2+) serves as cofactor.

Its subcellular location is the cytoplasm. It catalyses the reaction allantoate + H2O + 2 H(+) = (S)-2-ureidoglycine + NH4(+) + CO2. Its pathway is nitrogen metabolism; (S)-allantoin degradation. Sulfate could be an allosteric effector of the enzyme that is responsible for stabilizing substrate binding. In addition, this anion effector may act as a counterion during enzyme-mediated catalysis. In terms of biological role, involved in the anaerobic nitrogen utilization via the assimilation of allantoin. Catalyzes specifically the hydrolysis of allantoate to yield CO2, NH3 and S-ureidoglycine, which is unstable and readily undergoes a second deamination by S-ureidoglycine aminohydrolase AllE to yield S-ureidoglycolate and NH3. In vivo, the spontaneous release of S-ureidoglycolate and ammonia from S-ureidoglycine appears to be too slow to sustain an efficient flux of nitrogen. This chain is Allantoate amidohydrolase, found in Escherichia coli (strain K12).